The primary structure comprises 862 residues: Protein PRQFV-amide (862 aa).

The signal sequence occupies residues 1 to 20; sequence MSSQLLICSVFVLFTFGPNS. Positions 21 to 79 are excised as a propeptide; sequence FPSCLAQEQAGNSDATQLSADAKAPESAKDKSGDVQNDGTKSVRSKRDLEIDFGSGDVQ. The disordered stretch occupies residues 32–68; the sequence is NSDATQLSADAKAPESAKDKSGDVQNDGTKSVRSKRD. The segment covering 43–53 has biased composition (basic and acidic residues); sequence KAPESAKDKSG. A Valine amide modification is found at Val-86. A propeptide spanning residues 90-149 is cleaved from the precursor; it reads AAPPVFQTPLVQDKISGFIPSETESPVIGEFAFPGSVFMDDEEALGAEEEPMDDEDLEFY. Position 156 is a valine amide (Val-156). Positions 160–175 are excised as a propeptide; it reads GIDDYLLQEKLKDFIE. 9 positions are modified to valine amide: Val-182, Val-190, Val-198, Val-206, Val-214, Val-222, Val-230, Val-238, and Val-246. A propeptide spanning residues 250 to 259 is cleaved from the precursor; the sequence is EADPSFLFED. Position 266 is a valine amide (Val-266). Residues 270-300 constitute a propeptide that is removed on maturation; it reads SLDFLGGANWYNPYDVTMEPQSEGSDLQGFS. Val-307 carries the post-translational modification Valine amide. A propeptide spanning residues 311 to 319 is cleaved from the precursor; the sequence is DAFDMFEFS. Valine amide is present on Val-326. The propeptide occupies 330–338; it reads DQDEMFDFS. Residue Val-345 is modified to Valine amide. The propeptide occupies 349-357; it reads DLQEFFDLS. Val-364 is subject to Valine amide. The propeptide occupies 368-376; it reads EFDDEIDFS. Val-383 carries the valine amide modification. Residues 387-395 constitute a propeptide that is removed on maturation; that stretch reads ENDDDFDLS. A Valine amide modification is found at Val-402. The propeptide occupies 406-414; sequence ENDDEFDLS. Val-421 is subject to Valine amide. Basic and acidic residues predominate over residues 424 to 434; the sequence is RENDDELEFSK. Positions 424 to 528 are disordered; sequence RENDDELEFS…NNDDLDFSKR (105 aa). Residues 425–433 constitute a propeptide that is removed on maturation; the sequence is ENDDELEFS. Residue Val-440 is modified to Valine amide. Over residues 441–452 the composition is skewed to basic and acidic residues; the sequence is GKREDDEIDFSK. Residues 444 to 451 constitute a propeptide that is removed on maturation; that stretch reads EDDEIDFS. Val-458 bears the Valine amide mark. Positions 459 to 471 are enriched in basic and acidic residues; sequence GKRENDGEIDFSK. The propeptide occupies 462–470; it reads ENDGEIDFS. The residue at position 477 (Val-477) is a Valine amide. Positions 478–490 are enriched in basic and acidic residues; that stretch reads GKRENDDEIDFSK. The propeptide occupies 481–489; it reads ENDDEIDFS. Residue Val-496 is modified to Valine amide. Basic and acidic residues predominate over residues 497–508; the sequence is GKREDGEIDFSK. A propeptide spanning residues 500-507 is cleaved from the precursor; it reads EDGEIDFS. The residue at position 514 (Val-514) is a Valine amide. The segment covering 515-527 has biased composition (basic and acidic residues); that stretch reads GKRENNDDLDFSK. Residues 518–526 constitute a propeptide that is removed on maturation; sequence ENNDDLDFS. Val-533 is subject to Valine amide. The propeptide occupies 537–545; it reads EVDDEIDFS. Residues 549 to 634 form a disordered region; the sequence is RQFVGKREND…RQFVGKREND (86 aa). At Val-552 the chain carries Valine amide. The span at 553–565 shows a compositional bias: basic and acidic residues; that stretch reads GKRENDDDLDFSK. A propeptide spanning residues 556-564 is cleaved from the precursor; sequence ENDDDLDFS. Val-571 is subject to Valine amide. Residues 572-584 show a composition bias toward basic and acidic residues; that stretch reads GKRENDDDLEFSK. The propeptide occupies 575–583; it reads ENDDDLEFS. Val-590 bears the Valine amide mark. The propeptide occupies 594–602; that stretch reads ENDPLLDFS. The residue at position 609 (Val-609) is a Valine amide. Positions 610–622 are enriched in basic and acidic residues; that stretch reads GKRENDDDLDFSK. The propeptide occupies 613–621; that stretch reads ENDDDLDFS. At Val-628 the chain carries Valine amide. Positions 632 to 640 are excised as a propeptide; sequence ENDPLIDFS. A Valine amide modification is found at Val-647. A propeptide spanning residues 651–659 is cleaved from the precursor; the sequence is ESDGDFELS. Val-666 carries the post-translational modification Valine amide. A propeptide spanning residues 670–677 is cleaved from the precursor; the sequence is DVDGPGLS. Position 684 is a valine amide (Val-684). A propeptide spanning residues 688–695 is cleaved from the precursor; sequence EDYDIDFA. Valine amide is present on Val-702. Positions 706 to 714 are excised as a propeptide; the sequence is GNEDEFEMS. Valine amide is present on Val-721. The propeptide occupies 724 to 757; it reads RNFEELDQDFLRHMHDILDKRIPQFVSLPSLTAA. Val-764 bears the Valine amide mark. Residues 768 to 812 constitute a propeptide that is removed on maturation; sequence SDAAFLETLRHLRDYVGGQDEQNVSEFSYQHPYPSDLNDVGLIQQ. Valine amide is present on Val-819. The propeptide occupies 823–862; it reads GGDVDDINTTYRLGDFVSQPMSFVEEPSWLCRQLNAFGIS.

As to expression, expressed abundantly in the abdominal ganglion, much less in the pedal and cerebral ganglia, and rarely in the buccal and pleural ganglia.

It localises to the secreted. Functionally, PRQFV-amide may act as a modulator within the feeding system as well as in other systems of Aplysia. This is Protein PRQFV-amide from Aplysia californica (California sea hare).